We begin with the raw amino-acid sequence, 284 residues long: Protein phosphatase 1 regulatory subunit 3B (284 aa).

The PP1-binding motif motif lies at 61–64 (RVSF). One can recognise a CBM21 domain in the interval 124–232 (RNRLQTNHVC…SNKGKNYRIT (109 aa)). Serine 260 carries the phosphoserine modification.

In terms of assembly, interacts with glycogen, PPP1CC catalytic subunit of PP1 and PYGL. Associates with glycogen particles. Forms complexes with debranching enzyme, glycogen phosphorylase, glycogen synthase and phosphorylase kinase which is necessary for its regulation of PP1 activity. Highly expressed in liver (at protein level). Expressed predominantly in liver. Expressed moderately in heart. Expressed weakly in prostate, stomach, thyroid, lung, kidney, spleen and skeletal muscle.

Functionally, acts as a glycogen-targeting subunit for phosphatase PP1. Facilitates interaction of the PP1 with enzymes of the glycogen metabolism and regulates its activity. Suppresses the rate at which PP1 dephosphorylates (inactivates) glycogen phosphorylase and enhances the rate at which it activates glycogen synthase and therefore limits glycogen breakdown. Its activity is inhibited by PYGL, resulting in inhibition of the glycogen synthase and glycogen phosphorylase phosphatase activities of PP1. Dramatically increases basal and insulin-stimulated glycogen synthesis upon overexpression in hepatocytes. The polypeptide is Protein phosphatase 1 regulatory subunit 3B (Ppp1r3b) (Mus musculus (Mouse)).